A 232-amino-acid chain; its full sequence is Probable thiopurine S-methyltransferase (232 aa).

Residues 14-25 (WENRWQEGRTGF), leucine 54, glutamate 75, and arginine 137 each bind S-adenosyl-L-methionine. Phenylalanine 25 is a binding site for substrate.

The protein belongs to the class I-like SAM-binding methyltransferase superfamily. TPMT family.

The protein resides in the cytoplasm. The catalysed reaction is S-adenosyl-L-methionine + a thiopurine = S-adenosyl-L-homocysteine + a thiopurine S-methylether.. This chain is Probable thiopurine S-methyltransferase (tpmt), found in Danio rerio (Zebrafish).